The sequence spans 682 residues: Methionine--tRNA ligase (682 aa).

Positions 15 to 25 (PYANGAIHLGH) match the 'HIGH' region motif. Zn(2+) contacts are provided by C146, C149, C159, and C162. Residues 331-335 (KMSKS) carry the 'KMSKS' region motif. K334 contributes to the ATP binding site. A tRNA-binding domain is found at 580-682 (DLAKLDMRVA…NGVTAGMQVK (103 aa)).

Belongs to the class-I aminoacyl-tRNA synthetase family. MetG type 1 subfamily. Homodimer. Zn(2+) serves as cofactor.

It localises to the cytoplasm. It catalyses the reaction tRNA(Met) + L-methionine + ATP = L-methionyl-tRNA(Met) + AMP + diphosphate. Its function is as follows. Is required not only for elongation of protein synthesis but also for the initiation of all mRNA translation through initiator tRNA(fMet) aminoacylation. This Haemophilus influenzae (strain 86-028NP) protein is Methionine--tRNA ligase.